Reading from the N-terminus, the 109-residue chain is Large ribosomal subunit protein uL22 (109 aa).

The protein belongs to the universal ribosomal protein uL22 family. Part of the 50S ribosomal subunit.

This protein binds specifically to 23S rRNA; its binding is stimulated by other ribosomal proteins, e.g. L4, L17, and L20. It is important during the early stages of 50S assembly. It makes multiple contacts with different domains of the 23S rRNA in the assembled 50S subunit and ribosome. Its function is as follows. The globular domain of the protein is located near the polypeptide exit tunnel on the outside of the subunit, while an extended beta-hairpin is found that lines the wall of the exit tunnel in the center of the 70S ribosome. In Cupriavidus necator (strain ATCC 17699 / DSM 428 / KCTC 22496 / NCIMB 10442 / H16 / Stanier 337) (Ralstonia eutropha), this protein is Large ribosomal subunit protein uL22.